The primary structure comprises 563 residues: DNA repair protein rhp7 (563 aa).

The tract at residues M1–D101 is disordered. Residues E39–E59 are compositionally biased toward polar residues. The span at V78–K90 shows a compositional bias: basic residues.

The protein belongs to the RAD7 family.

It localises to the nucleus. Functionally, involved in global genome repair (GGR) via nucleotide excision repair (NER), in conjunction with rhp16, after UV irradiation. This Schizosaccharomyces pombe (strain 972 / ATCC 24843) (Fission yeast) protein is DNA repair protein rhp7 (rhp7).